A 37-amino-acid chain; its full sequence is Large ribosomal subunit protein bL36c (37 aa).

Belongs to the bacterial ribosomal protein bL36 family.

It is found in the plastid. The protein localises to the chloroplast. The protein is Large ribosomal subunit protein bL36c of Lotus japonicus (Lotus corniculatus var. japonicus).